The sequence spans 386 residues: 2-isopropylmalate synthase (386 aa).

Residues 12-265 (VRIFDTTLRD…DVGVRTYLLY (254 aa)) enclose the Pyruvate carboxyltransferase domain. A divalent metal cation-binding residues include Asp21, His203, His205, and Asn239.

This sequence belongs to the alpha-IPM synthase/homocitrate synthase family. As to quaternary structure, homodimer. A divalent metal cation serves as cofactor.

It carries out the reaction 3-methyl-2-oxobutanoate + acetyl-CoA + H2O = (2S)-2-isopropylmalate + CoA + H(+). Its pathway is amino-acid biosynthesis; L-leucine biosynthesis; L-leucine from 3-methyl-2-oxobutanoate: step 1/4. Is not inhibited by leucine. In terms of biological role, catalyzes the condensation of the acetyl group of acetyl-CoA with 3-methyl-2-oxobutanoate (2-oxoisovalerate) to form 3-carboxy-3-hydroxy-4-methylpentanoate (2-isopropylmalate). Carries out the first step of the leucine biosynthesis pathway. Also displays a low citramalate synthase activity, using pyruvate as substrate, but is unable to use 2-oxoglutarate. This chain is 2-isopropylmalate synthase, found in Sulfolobus acidocaldarius (strain ATCC 33909 / DSM 639 / JCM 8929 / NBRC 15157 / NCIMB 11770).